A 388-amino-acid chain; its full sequence is Alanine racemase (388 aa).

The Proton acceptor; specific for D-alanine role is filled by Lys40. Position 40 is an N6-(pyridoxal phosphate)lysine (Lys40). Arg137 is a binding site for substrate. Tyr269 serves as the catalytic Proton acceptor; specific for L-alanine. Substrate is bound at residue Met318.

It belongs to the alanine racemase family. Pyridoxal 5'-phosphate is required as a cofactor.

The catalysed reaction is L-alanine = D-alanine. It participates in amino-acid biosynthesis; D-alanine biosynthesis; D-alanine from L-alanine: step 1/1. In terms of biological role, catalyzes the interconversion of L-alanine and D-alanine. May also act on other amino acids. The polypeptide is Alanine racemase (alr) (Halalkalibacterium halodurans (strain ATCC BAA-125 / DSM 18197 / FERM 7344 / JCM 9153 / C-125) (Bacillus halodurans)).